The chain runs to 352 residues: Coproporphyrin III ferrochelatase (352 aa).

Residues Ser52 and Tyr121 each coordinate Fe-coproporphyrin III. Positions 178 and 267 each coordinate Fe(2+).

Belongs to the ferrochelatase family.

Its subcellular location is the cytoplasm. It catalyses the reaction Fe-coproporphyrin III + 2 H(+) = coproporphyrin III + Fe(2+). It participates in porphyrin-containing compound metabolism; protoheme biosynthesis. Its function is as follows. Involved in coproporphyrin-dependent heme b biosynthesis. Catalyzes the insertion of ferrous iron into coproporphyrin III to form Fe-coproporphyrin III. The polypeptide is Coproporphyrin III ferrochelatase (Propionibacterium freudenreichii subsp. freudenreichii).